A 196-amino-acid chain; its full sequence is Molybdenum cofactor guanylyltransferase (196 aa).

Residues 10–12, K23, N51, D69, and D99 contribute to the GTP site; that span reads LAG. Position 99 (D99) interacts with Mg(2+).

This sequence belongs to the MobA family. As to quaternary structure, monomer. The cofactor is Mg(2+).

It is found in the cytoplasm. It catalyses the reaction Mo-molybdopterin + GTP + H(+) = Mo-molybdopterin guanine dinucleotide + diphosphate. In terms of biological role, transfers a GMP moiety from GTP to Mo-molybdopterin (Mo-MPT) cofactor (Moco or molybdenum cofactor) to form Mo-molybdopterin guanine dinucleotide (Mo-MGD) cofactor. This is Molybdenum cofactor guanylyltransferase from Shewanella sediminis (strain HAW-EB3).